A 352-amino-acid polypeptide reads, in one-letter code: Molybdenum import ATP-binding protein ModC (352 aa).

The ABC transporter domain occupies 1–229 (MLELNFSQTL…SVMNPWLPKE (229 aa)). Residue 31 to 38 (GVSGAGKT) participates in ATP binding. Residues 289 to 352 (QTSIRNVLRA…AQIKSVSITA (64 aa)) enclose the Mop domain.

This sequence belongs to the ABC transporter superfamily. Molybdate importer (TC 3.A.1.8) family. In terms of assembly, the complex is composed of two ATP-binding proteins (ModC), two transmembrane proteins (ModB) and a solute-binding protein (ModA).

The protein resides in the cell inner membrane. The catalysed reaction is molybdate(out) + ATP + H2O = molybdate(in) + ADP + phosphate + H(+). Functionally, part of the ABC transporter complex ModABC involved in molybdenum import. Responsible for energy coupling to the transport system. The protein is Molybdenum import ATP-binding protein ModC of Shigella flexneri.